Here is a 412-residue protein sequence, read N- to C-terminus: Double C2-like domain-containing protein beta (412 aa).

The segment at 1 to 36 is negatively regulates targeting to plasma membrane; sequence MTLRRRGEKATISIQEHMAIDVCPGPIRPIKQISDY. The mediates interaction with DYNLT1 stretch occupies residues 1 to 90; that stretch reads MTLRRRGEKA…EDVDQLFGAY (90 aa). Residues 38-123 form a disordered region; it reads PRFPRGLPPD…PDADGYESDD (86 aa). The span at 49–70 shows a compositional bias: low complexity; sequence GPRAAAPPDAPARPAVAGAGRR. The segment covering 95–108 has biased composition (pro residues); it reads GPSPGPSPARPPAK. The segment covering 112–123 has biased composition (acidic residues); it reads DEPDADGYESDD. C2 domains are found at residues 126–250 and 266–399; these read ALGT…SICL and ERGR…ERWH. Positions 157, 163, 218, 220, 297, 303, 357, 359, and 365 each coordinate Ca(2+). The segment at 257–375 is mediates interaction with STXBP3; sequence DKTEDKSLEE…FIGGVVLGIH (119 aa). Ser-411 is modified (phosphoserine).

Interacts with the SNARE (soluble N-ethylmaleimide-sensitive factor attached protein receptor) complex composed of SNAP25, STX1A and VAMP2; the interaction is calcium-dependent and competitive with SYT1. Interacts with STX4; the interaction is calcium-dependent, increased by insulin and glucose, and mediates vesicle fusion with plasma membrane in pancreatic cells and adipocytes. Interacts with STXBP3; the interaction is direct, occurs at the cell membrane and regulates glucose-stimulated insulin secretion. May interact with UNC13A; the interaction mediates targeting to the plasma membrane. Interacts with cytoplasmic dynein light chain DYNLT1. The cofactor is Ca(2+). Widely expressed with highest levels in brain and kidney. Expressed in pancreatic islet cells (at protein level).

It localises to the cytoplasm. It is found in the cytoplasmic granule. The protein resides in the cell membrane. Functionally, calcium sensor which positively regulates SNARE-dependent fusion of vesicles with membranes. Binds phospholipids in a calcium-dependent manner and may act at the priming stage of fusion by modifying membrane curvature to stimulate fusion. Involved in calcium-triggered exocytosis in chromaffin cells and calcium-dependent spontaneous release of neurotransmitter in absence of action potentials in neuronal cells. Involved both in glucose-stimulated insulin secretion in pancreatic cells and insulin-dependent GLUT4 transport to the plasma membrane in adipocytes. The sequence is that of Double C2-like domain-containing protein beta from Homo sapiens (Human).